A 321-amino-acid chain; its full sequence is Ribosomal RNA small subunit methyltransferase H (321 aa).

S-adenosyl-L-methionine contacts are provided by residues 42–44 (GGH), Asp62, Phe86, Asp107, and Gln114.

It belongs to the methyltransferase superfamily. RsmH family.

It localises to the cytoplasm. It carries out the reaction cytidine(1402) in 16S rRNA + S-adenosyl-L-methionine = N(4)-methylcytidine(1402) in 16S rRNA + S-adenosyl-L-homocysteine + H(+). Functionally, specifically methylates the N4 position of cytidine in position 1402 (C1402) of 16S rRNA. The polypeptide is Ribosomal RNA small subunit methyltransferase H (Herminiimonas arsenicoxydans).